A 220-amino-acid chain; its full sequence is Large ribosomal subunit protein uL16z (220 aa).

It belongs to the universal ribosomal protein uL16 family. Component of the small ribosomal subunit. Mature ribosomes consist of a small (40S) and a large (60S) subunit. The 40S subunit contains about 33 different proteins and 1 molecule of RNA (18S). The 60S subunit contains about 49 different proteins and 3 molecules of RNA (25S, 5.8S and 5S). Interacts with NIK1. Interacts with LIMYB. Phosphorylated by NIK1 and NIK2 in vitro. In terms of tissue distribution, ubiquitous, with the highest expression in flowers. Expressed in seedlings, leaves, roots, stems and flowers. Expressed in young leaves, mostly in dividing cells and in the hydathodes, in the root tips and lateral root primordia, in pistils, anthers, and pollen grains, and in developing seeds.

It is found in the cytoplasm. It localises to the nucleus. Ribosomal protein involved in translational regulation. Contribute to general translation under UV-B stress. Involved in the NIK1-mediated defense response to geminivirus infection. Acts coordinately with LIMYB as a transcriptional repressor. The chain is Large ribosomal subunit protein uL16z from Arabidopsis thaliana (Mouse-ear cress).